Reading from the N-terminus, the 568-residue chain is Urease subunit beta (568 aa).

The 438-residue stretch at 131–568 folds into the Urease domain; that stretch reads GGIDTHIHFI…LSLAQLYNLF (438 aa). Residues His-136, His-138, and Lys-219 each coordinate Ni(2+). Lys-219 is modified (N6-carboxylysine). Residue His-221 coordinates substrate. The Ni(2+) site is built by His-248 and His-274. The active-site Proton donor is the His-321. Ni(2+) is bound at residue Asp-361.

It belongs to the metallo-dependent hydrolases superfamily. Urease alpha subunit family. As to quaternary structure, heterohexamer of 3 UreA (alpha) and 3 UreB (beta) subunits. Ni cation is required as a cofactor. Carboxylation allows a single lysine to coordinate two nickel ions.

Its subcellular location is the cytoplasm. It catalyses the reaction urea + 2 H2O + H(+) = hydrogencarbonate + 2 NH4(+). Its pathway is nitrogen metabolism; urea degradation; CO(2) and NH(3) from urea (urease route): step 1/1. In Helicobacter heilmannii, this protein is Urease subunit beta.